The following is a 2453-amino-acid chain: Tyrosine-protein phosphatase non-receptor type 13 (2453 aa).

Positions valine 3 to serine 190 constitute a KIND domain. The tract at residues threonine 183–leucine 227 is disordered. Residues serine 190–arginine 205 show a composition bias toward basic and acidic residues. Phosphoserine is present on serine 240. Residues glutamate 253–glutamine 285 form a disordered region. The span at leucine 256–serine 270 shows a compositional bias: basic and acidic residues. The span at threonine 272–glutamine 285 shows a compositional bias: polar residues. A phosphoserine mark is found at serine 297 and serine 298. Positions serine 429–glutamate 457 are disordered. Positions threonine 447–glutamate 457 are enriched in polar residues. Residues threonine 458 to serine 493 adopt a coiled-coil conformation. Positions arginine 565–arginine 865 constitute an FERM domain. Serine 883, serine 890, serine 901, serine 904, and serine 907 each carry phosphoserine. The span at lysine 944–arginine 957 shows a compositional bias: basic and acidic residues. Disordered stretches follow at residues lysine 944 to leucine 966 and leucine 1007 to lysine 1063. Residues serine 1021 and serine 1025 each carry the phosphoserine modification. Basic and acidic residues predominate over residues serine 1025–aspartate 1034. Over residues serine 1049–serine 1058 the composition is skewed to low complexity. At serine 1076 the chain carries Phosphoserine. One can recognise a PDZ 1 domain in the interval leucine 1084–lysine 1170. 2 disordered regions span residues aspartate 1199 to phenylalanine 1356 and glycine 1441 to valine 1478. Position 1221 is a phosphoserine (serine 1221). Polar residues-rich tracts occupy residues glutamate 1242–asparagine 1252 and proline 1267–lysine 1279. Residue serine 1270 is modified to Phosphoserine. Residues glycine 1297–serine 1315 show a composition bias toward basic and acidic residues. Low complexity predominate over residues serine 1331–serine 1341. A PDZ 2 domain is found at glutamate 1357–glutamine 1442. Basic and acidic residues predominate over residues alanine 1467–valine 1478. The PDZ 3 domain maps to glutamate 1491–alanine 1579. Residues leucine 1602–lysine 1629 are compositionally biased toward polar residues. Disordered regions lie at residues leucine 1602–proline 1662 and lysine 1695–threonine 1726. Basic and acidic residues predominate over residues serine 1638–valine 1655. 2 PDZ domains span residues leucine 1764–leucine 1845 and leucine 1857–glycine 1942. 2 disordered regions span residues glutamate 1991 to tyrosine 2024 and arginine 2051 to phenylalanine 2139. Positions glutamate 2012–aspartate 2021 are enriched in basic and acidic residues. Residues proline 2180–valine 2434 enclose the Tyrosine-protein phosphatase domain. Residues aspartate 2345, cysteine 2375–arginine 2381, and glutamine 2419 each bind substrate. The Phosphocysteine intermediate role is filled by cysteine 2375.

Belongs to the protein-tyrosine phosphatase family. Non-receptor class subfamily. Interacts (via the first PDZ domain) with PLEKHA1 and PLEKHA2. Interacts (via the second PDZ domain) with TNFRSF6 (Fas receptor) (via C-terminus). Interacts (via the second PDZ domain) with TRIP6 (via the third LIM domain and C-terminus). Interacts (via the third PDZ domain) with NGFR (via C-terminal SVP motif) and PKN2 (via C-terminus). Interacts (via the second or fourth PDZ domains) with PDLIM4 (via C-terminus only or via combined C-terminus and LIM domain, but not LIM domain only). Found in a complex with PDLIM4 and TRIP6. Interacts with PDLIM4; this interaction results in dephosphorylation of SRC 'Tyr-419' by this protein leading to its inactivation. Interacts with BRD7. Interacts with RAPGEF6. Interacts with ARHGAP29. Interacts with PIK3R2; dephosphorylates PIK3R2. Interacts with FBXL2. Interacts (via the FERM domain) with ENTR1. Found in a complex with ENTR1, PTPN13 and GIT1. Expressed predominantly in kidney and, to a lesser extent, in lung, heart, brain and testis.

The protein localises to the cytoplasm. It localises to the cytoskeleton. Its subcellular location is the nucleus. It is found in the cell projection. The protein resides in the lamellipodium. It carries out the reaction O-phospho-L-tyrosyl-[protein] + H2O = L-tyrosyl-[protein] + phosphate. Its function is as follows. Tyrosine phosphatase which negatively regulates FAS-induced apoptosis and NGFR-mediated pro-apoptotic signaling. May regulate phosphoinositide 3-kinase (PI3K) signaling through dephosphorylation of PIK3R2. The protein is Tyrosine-protein phosphatase non-receptor type 13 (Ptpn13) of Mus musculus (Mouse).